The sequence spans 432 residues: Myb family transcription factor EFM (432 aa).

Positions 36-81 form a coiled coil; it reads LEDLLSRLEQERLKIDAFKRELPLCMQLLNNAVEVYKQQLEAYRAN. 2 stretches are compositionally biased toward polar residues: residues 123–139 and 187–197; these read SQSE…TDQS and SPTNEHTNGQD. A disordered region spans residues 123–237; sequence SQSETKPKNI…SQSNRKARRC (115 aa). A compositionally biased stretch (low complexity) spans 201–231; it reads ESMINNDNNYNNNNNNNSNSNGVSSTTSQSN. In terms of domain architecture, HTH myb-type spans 230–290; it reads SNRKARRCWS…HLQKYRLHTR (61 aa). The segment at residues 261–286 is a DNA-binding region (H-T-H motif); the sequence is PKQIRELMKVDGLTNDEVKSHLQKYR. Residues 354 to 412 are disordered; that stretch reads FYTTPPPPQPLHHHHFQTFNGSSGGTASTDSTHHQVTDSPTVEGKSPESGGGERKGLAA.

In terms of assembly, interacts with JMJ30, but not with SVP, FLC or CO. As to expression, specifically expressed in vascular tissues of cotyledons, rosette leaves and cauline leaves. Not detected in the vegetative shoot apical meristem.

It is found in the nucleus. In terms of biological role, transcription factor acting as a flowering repressor, directly repressing FT expression in a dosage-dependent manner in the leaf vasculature. The polypeptide is Myb family transcription factor EFM (Arabidopsis thaliana (Mouse-ear cress)).